Reading from the N-terminus, the 917-residue chain is Translation initiation factor IF-2 (917 aa).

Positions 241–312 are disordered; the sequence is EEAKKGTLHK…GGWRSGGGRK (72 aa). A compositionally biased stretch (basic and acidic residues) spans 252 to 262; the sequence is AKAEGAEDKKK. Polar residues predominate over residues 274–283; that stretch reads SSETSSTWQE. Positions 298–308 are enriched in gly residues; that stretch reads TSGGVGGWRSG. In terms of domain architecture, tr-type G spans 415 to 582; sequence PRPPVVTVMG…NVLLQAEILE (168 aa). Positions 424–431 are G1; the sequence is GHVDHGKT. 424-431 contacts GTP; it reads GHVDHGKT. Residues 449–453 form a G2 region; sequence GITQH. Positions 470-473 are G3; that stretch reads DTPG. GTP-binding positions include 470 to 474 and 524 to 527; these read DTPGH and NKID. The interval 524–527 is G4; sequence NKID. The tract at residues 560-562 is G5; the sequence is SAK.

Belongs to the TRAFAC class translation factor GTPase superfamily. Classic translation factor GTPase family. IF-2 subfamily.

Its subcellular location is the cytoplasm. Its function is as follows. One of the essential components for the initiation of protein synthesis. Protects formylmethionyl-tRNA from spontaneous hydrolysis and promotes its binding to the 30S ribosomal subunits. Also involved in the hydrolysis of GTP during the formation of the 70S ribosomal complex. The protein is Translation initiation factor IF-2 of Polynucleobacter necessarius subsp. necessarius (strain STIR1).